The chain runs to 414 residues: MTQANLSETLFKPRFKHPETSTLVRRFNHGAQPPVQSALDGKTIPHWYRMINRLMWIWRGIDPREILDVQARIVMSDAERTDDDLYDTVIGYRGGNWIYEWATQAMVWQQKACAEEDPQLSGRHWLHAATLYNIAAYPHLKGDDLAEQAQALSNRAYEEAAQRLPGTMRQMEFTVPGGAPITGFLHMPKGDGPFPTVLMCGGLDAMQTDYYSLYERYFAPRGIAMLTIDMPSVGFSSKWKLTQDSSLLHQHVLKALPNVPWVDHTRVAAFGFRFGANVAVRLAYLESPRLKAVACLGPVVHTLLSDFKCQQQVPEMYLDVLASRLGMHDASDDALRVELNRYSLKVQGLLGRRCPTPMLSGYWKNDPFSPEEDSRLITSSSADGKLLEIPFNPVYRNFDKGLQEITGWIEKRLC.

It belongs to the FrsA family.

It catalyses the reaction a carboxylic ester + H2O = an alcohol + a carboxylate + H(+). In terms of biological role, catalyzes the hydrolysis of esters. The polypeptide is Esterase FrsA (Escherichia coli O139:H28 (strain E24377A / ETEC)).